We begin with the raw amino-acid sequence, 320 residues long: Probable cell division protein WhiA (320 aa).

The H-T-H motif DNA-binding region spans 276–310; it reads TLKELGEMVESGKVSKSGVNHRLRKIDELAEKLRA.

It belongs to the WhiA family.

Its function is as follows. Involved in cell division and chromosome segregation. The chain is Probable cell division protein WhiA from Halalkalibacterium halodurans (strain ATCC BAA-125 / DSM 18197 / FERM 7344 / JCM 9153 / C-125) (Bacillus halodurans).